Consider the following 315-residue polypeptide: ADP/ATP translocase (315 aa).

Topologically, residues 1–13 (MSNKQETKILGMP) are mitochondrial intermembrane. Solcar repeat units follow at residues 13-106 (PPFV…FKAM) and 118-210 (KWMA…IKPV). The chain crosses the membrane as a helical span at residues 14–37 (PFVVDFLMGGVSAAVSKTAAAPIE). Lys-30 contacts bongkrekate. The Mitochondrial matrix segment spans residues 38 to 80 (RIKLLVQNQDEMIKAGRLDRRYNGIIDCFRRTTADEGLMALWR). A cardiolipin-binding positions include Ile-62 and 81–83 (GNT). A helical membrane pass occupies residues 81-104 (GNTANVIRYFPTQALNFAFRDKFK). Residue Arg-88 participates in ADP binding. Bongkrekate-binding positions include 88-89 (RY) and Asn-96. Over 105–115 (AMFGYKKDKDG) the chain is Mitochondrial intermembrane. A helical membrane pass occupies residues 116–145 (YAKWMAGNLASGGAAGATSLLFVYSLDYAR). Residues 146 to 184 (TRLANDAKSAKGGGARQFNGLIDVYRKTLASDGIAGLYR) are Mitochondrial matrix-facing. A cardiolipin contacts are provided by residues Leu-166 and 184–185 (RG). Residues 185-213 (GFGPSVAGIVVYRGLYFGMYDSIKPVVLV) traverse the membrane as a helical segment. 196 to 197 (YR) contacts bongkrekate. Over 214–216 (GPL) the chain is Mitochondrial intermembrane. Residues 217 to 242 (ANNFLASFLLGWCVTTGAGIASYPLD) form a helical membrane-spanning segment. A Solcar repeat occupies 218 to 304 (NNFLASFLLG…LSIYDQLQIL (87 aa)). The Mitochondrial matrix segment spans residues 243–283 (TVRRRMMMTSGEAVKYKSSIDAFRQIIAKEGVKSLFKGAGA). Residue Arg-245 coordinates ADP. The Nucleotide carrier signature motif signature appears at 245–250 (RRRMMM). A cardiolipin-binding positions include 260–261 (SS) and 280–282 (GAG). Residues 284-304 (NILRGVAGAGVLSIYDQLQIL) traverse the membrane as a helical segment. The Mitochondrial intermembrane portion of the chain corresponds to 305-315 (LFGKAFKGGSG).

The protein belongs to the mitochondrial carrier (TC 2.A.29) family. In terms of assembly, monomer.

It localises to the mitochondrion inner membrane. The enzyme catalyses ADP(in) + ATP(out) = ADP(out) + ATP(in). Its activity is regulated as follows. The matrix-open state (m-state) is inhibited by the membrane-permeable bongkrekic acid (BKA). The cytoplasmic-open state (c-state) is inhibited by the membrane-impermeable toxic inhibitor carboxyatractyloside (CATR). Functionally, ADP:ATP antiporter that mediates import of ADP into the mitochondrial matrix for ATP synthesis, and export of ATP out to fuel the cell. Cycles between the cytoplasmic-open state (c-state) and the matrix-open state (m-state): operates by the alternating access mechanism with a single substrate-binding site intermittently exposed to either the cytosolic (c-state) or matrix (m-state) side of the inner mitochondrial membrane. The chain is ADP/ATP translocase from Thermothelomyces thermophilus (strain ATCC 42464 / BCRC 31852 / DSM 1799) (Sporotrichum thermophile).